Consider the following 328-residue polypeptide: DNA-directed RNA polymerase subunit alpha (328 aa).

The alpha N-terminal domain (alpha-NTD) stretch occupies residues 1–231; sequence MIYQMQMPEK…EHVSLFANFS (231 aa). The alpha C-terminal domain (alpha-CTD) stretch occupies residues 252-328; sequence MRKMLLTRIE…MDITKYQMKG (77 aa).

The protein belongs to the RNA polymerase alpha chain family. As to quaternary structure, homodimer. The RNAP catalytic core consists of 2 alpha, 1 beta, 1 beta' and 1 omega subunit. When a sigma factor is associated with the core the holoenzyme is formed, which can initiate transcription.

The catalysed reaction is RNA(n) + a ribonucleoside 5'-triphosphate = RNA(n+1) + diphosphate. In terms of biological role, DNA-dependent RNA polymerase catalyzes the transcription of DNA into RNA using the four ribonucleoside triphosphates as substrates. This Chlorobium phaeobacteroides (strain BS1) protein is DNA-directed RNA polymerase subunit alpha.